The sequence spans 994 residues: Chloride channel protein 1 (994 aa).

Over 1 to 118 (MERSQSQRHG…VLRRKLGEDW (118 aa)) the chain is Cytoplasmic. The helical transmembrane segment at 119–150 (IFLVLLGLLMALVSWCMDYVSAKSLQAYKWTY) threads the bilayer. The Extracellular portion of the chain corresponds to 151–158 (AQMKPSLP). Residues 159–179 (LQYLAWVTFPLILILFSALFC) traverse the membrane as a helical segment. Residues 180 to 183 (QLIS) are Cytoplasmic-facing. Positions 184-189 (PQAVGS) form an intramembrane region, note=Loop between two helices. Residues 188–192 (GSGIP) carry the Selectivity filter part_1 motif. Serine 189 serves as a coordination point for chloride. An intramembrane region (helical) is located at residues 190–195 (GIPEMK). At 196–208 (TILRGVVLKEYLT) the chain is on the cytoplasmic side. The segment at residues 209-224 (LKAFVAKVVALTAGLG) is an intramembrane region (helical). The segment at residues 225–230 (SGIPVG) is an intramembrane region (note=Loop between two helices). Positions 230 to 234 (GKEGP) match the Selectivity filter part_2 motif. The segment at residues 231 to 246 (KEGPFVHIASICAAVL) is an intramembrane region (helical). Over 247–268 (SKFMSMFSGVYEQPYYYTDILT) the chain is Cytoplasmic. 2 intramembrane regions (helical) span residues 269 to 280 (VGCAVGVGCCFG) and 281 to 290 (TPLGGVLFSI). At 291-301 (EVTSTYFAVRN) the chain is on the cytoplasmic side. The helical transmembrane segment at 302–321 (YWRGFFAATFSAFVFRVLAV) threads the bilayer. At 322–347 (WNKDAVTITALFRTNFRMDFPFDLKE) the chain is on the extracellular side. Residues 348–376 (LPAFAVIGICCGFLGAVFVYLHRQVMLGV) traverse the membrane as a helical segment. Over 377–390 (RKHKCLSQFLAKHR) the chain is Cytoplasmic. The chain crosses the membrane as a helical span at residues 391-408 (LLYPGIVTFVIASLTFPP). Topologically, residues 409-414 (GMGQFM) are extracellular. The segment at residues 415–418 (AGEL) is an intramembrane region (note=Loop between two helices). Positions 419 to 426 (MPREAIST) form an intramembrane region, helical. Topologically, residues 427–457 (LFDNNTWVKHIGDPQSLGQSAVWLHPQVNVI) are extracellular. Positions 458-475 (IIILLFFVMKFWMSIVAT) form an intramembrane region, helical. Residues 476–482 (TMPIPCG) constitute an intramembrane region (note=Loop between two helices). Positions 482 to 486 (GGFMP) match the Selectivity filter part_3 motif. The helical intramembrane region spans 483–498 (GFMPVFVLGAAFGRLV). Phenylalanine 484 provides a ligand contact to chloride. Over 499–521 (GEIMAMLFPEGILFDDIIYKILP) the chain is Extracellular. The segment at residues 522–538 (GGYAVIGAAALTGAVSH) is an intramembrane region (helical). The segment at residues 539 to 540 (TV) is an intramembrane region (note=Loop between two helices). The helical intramembrane region spans 541-554 (STAVICFELTGQIA). Residues 555 to 557 (HIL) lie on the Extracellular side of the membrane. The segment at residues 558–571 (PMMVAVILANMVAQ) is an intramembrane region (helical). An intramembrane region (note=Loop between two helices) is located at residues 572 to 575 (SLQP). Residues 576-578 (SLY) constitute an intramembrane region (helical). Position 578 (tyrosine 578) interacts with chloride. Residues 579–994 (DSIIQVKKLP…DEEDEDELIL (416 aa)) lie on the Cytoplasmic side of the membrane. Positions 609 to 668 (MVRDVKFVSASCTYGELRNLLQATTVKTLPLVDSKDSMILLGSVERSELQSLLQRHLCAE) constitute a CBS 1 domain. Residues 710-770 (EDEDEDLSRK…PEASDSADQR (61 aa)) are disordered. Positions 725–739 (TPAPPPPSPPPPPSQ) are enriched in pro residues. The CBS 2 domain maps to 827 to 882 (IDQSPFQLVEQTTLHKTHTLFSLLGLHLAYVTSMGKLRGVLALEELQKAIEGHTKS). Disordered stretches follow at residues 886 to 954 (LRPP…ARAE) and 971 to 994 (ELAD…ELIL). Serine 892 is subject to Phosphoserine. Residues 933–943 (PETPVPPPSPE) are compositionally biased toward pro residues. The segment covering 985-994 (DEEDEDELIL) has biased composition (acidic residues).

Belongs to the chloride channel (TC 2.A.49) family. ClC-1/CLCN1 subfamily. As to quaternary structure, homodimer. Predominantly expressed in skeletal muscles.

It is found in the cell membrane. It localises to the sarcolemma. The protein localises to the T-tubule. It catalyses the reaction chloride(in) = chloride(out). The enzyme catalyses thiocyanate(in) = thiocyanate(out). The catalysed reaction is bromide(in) = bromide(out). It carries out the reaction nitrate(in) = nitrate(out). It catalyses the reaction iodide(out) = iodide(in). Modulated by membrane voltage with depolarization favouring channel opening and hyperpolarization favouring channel closure. Inhibited by acidic pH and ATP binding due to a shift of voltage dependence of common gating to more positive voltages. Inhibited by 9-anthracene-carboxylic. Functionally, voltage-gated chloride channel involved in skeletal muscle excitability. Generates most of the plasma membrane chloride conductance in skeletal muscle fibers, stabilizes the resting membrane potential and contributes to the repolarization phase during action potential firing. Forms a homodimeric channel where each subunit has its own ion conduction pathway. Conducts double-barreled currents controlled by two types of gates, two fast glutamate gates that control each subunit independently and a slow common gate that opens and shuts off both subunits simultaneously. Has a significant open probability at muscle resting potential and is further activated upon membrane depolarization. Permeable to small monovalent anions with ion selectivity for chloride &gt; thiocyanate &gt; bromide &gt; nitrate &gt; iodide. The polypeptide is Chloride channel protein 1 (Clcn1) (Mus musculus (Mouse)).